The primary structure comprises 69 residues: Large ribosomal subunit protein bL28 (69 aa).

This sequence belongs to the bacterial ribosomal protein bL28 family.

This chain is Large ribosomal subunit protein bL28, found in Nitratidesulfovibrio vulgaris (strain DSM 19637 / Miyazaki F) (Desulfovibrio vulgaris).